Here is a 266-residue protein sequence, read N- to C-terminus: Small ribosomal subunit protein eS1 (266 aa).

Residues 234-266 (EGGTGTATKATGDDTGAKVERADGYEPPIQETV) form a disordered region. The segment covering 244-257 (TGDDTGAKVERADG) has biased composition (basic and acidic residues).

Belongs to the eukaryotic ribosomal protein eS1 family. As to quaternary structure, component of the small ribosomal subunit. Mature ribosomes consist of a small (40S) and a large (60S) subunit. The 40S subunit contains about 33 different proteins and 1 molecule of RNA (18S). The 60S subunit contains about 49 different proteins and 3 molecules of RNA (28S, 5.8S and 5S). Part of the small subunit (SSU) processome, composed of more than 70 proteins and the RNA chaperone small nucleolar RNA (snoRNA) U3.

Its subcellular location is the cytoplasm. The protein localises to the nucleus. The protein resides in the nucleolus. Its function is as follows. Component of the small ribosomal subunit. The ribosome is a large ribonucleoprotein complex responsible for the synthesis of proteins in the cell. Part of the small subunit (SSU) processome, first precursor of the small eukaryotic ribosomal subunit. During the assembly of the SSU processome in the nucleolus, many ribosome biogenesis factors, an RNA chaperone and ribosomal proteins associate with the nascent pre-rRNA and work in concert to generate RNA folding, modifications, rearrangements and cleavage as well as targeted degradation of pre-ribosomal RNA by the RNA exosome. May play a role during erythropoiesis. This chain is Small ribosomal subunit protein eS1 (rps3a), found in Solea senegalensis (Senegalese sole).